The chain runs to 584 residues: Endoribonuclease YBEY, chloroplastic (584 aa).

Residues 1–50 (MLSRVCPTLRYNRIWSAHAREMPRATLLLLQPNFFHSSPKTALVNRLDVT) constitute a chloroplast transit peptide. Zn(2+) is bound by residues His-240, His-244, and His-250.

Belongs to the endoribonuclease YbeY family. Zn(2+) is required as a cofactor.

The protein resides in the plastid. Its subcellular location is the chloroplast stroma. Functionally, endoribonuclease required for chloroplast ribosomal RNA (rRNA) processing and essential for normal growth and development. May be involved in maturation of both the 5' and 3' ends of 16S, 23S, and 4.5S rRNAs. Cleaves chloroplast rRNAs, mRNAs and tRNAs in vitro. This chain is Endoribonuclease YBEY, chloroplastic, found in Arabidopsis thaliana (Mouse-ear cress).